Consider the following 1028-residue polypeptide: Contactin-3 (1028 aa).

Positions 1–19 are cleaved as a signal peptide; the sequence is MMFPWKQLILLSFIGCLGG. Ig-like C2-type domains follow at residues 26-117, 122-208, 227-313, 318-402, 408-497, and 499-593; these read PVFI…AKLQ, ENFK…ARVL, PKIE…GRLT, PHWV…AELK, PDFS…LVVT, and PTRI…ADLI. 5 cysteine pairs are disulfide-bonded: Cys50–Cys100, Cys144–Cys196, Cys249–Cys297, Cys339–Cys386, and Cys431–Cys479. Asn65 and Asn193 each carry an N-linked (GlcNAc...) asparagine glycan. Residues Asn375, Asn468, and Asn489 are each glycosylated (N-linked (GlcNAc...) asparagine). The cysteines at positions 521 and 577 are disulfide-linked. 4 consecutive Fibronectin type-III domains span residues 600–698, 703–800, 805–901, and 902–998; these read PPEN…TEEA, PPSE…SAEE, APSQ…TKKT, and PPSQ…TSMD. The interval 684 to 713 is disordered; that stretch reads GEPSLPSEKVRTEEAVPEVPPSEVNGGGGS. N-linked (GlcNAc...) asparagine glycans are attached at residues Asn765, Asn860, Asn895, Asn913, Asn931, and Asn956. A lipid anchor (GPI-anchor amidated serine) is attached at Ser1002. Residues 1003–1028 constitute a propeptide, removed in mature form; that stretch reads TSAISNVHPMSSYMPIVLFLIVYVLW.

Belongs to the immunoglobulin superfamily. Contactin family. As to quaternary structure, interacts with PTPRG. As to expression, in brain, it is expressed in frontal lobe, occipital lobe, cerebellum and amygdala.

It is found in the cell membrane. Its function is as follows. Contactins mediate cell surface interactions during nervous system development. Has some neurite outgrowth-promoting activity. In Homo sapiens (Human), this protein is Contactin-3 (CNTN3).